Here is a 143-residue protein sequence, read N- to C-terminus: Holo-[acyl-carrier-protein] synthase (143 aa).

Positions 9 and 63 each coordinate Mg(2+).

The protein belongs to the P-Pant transferase superfamily. AcpS family. It depends on Mg(2+) as a cofactor.

The protein resides in the cytoplasm. The catalysed reaction is apo-[ACP] + CoA = holo-[ACP] + adenosine 3',5'-bisphosphate + H(+). In terms of biological role, transfers the 4'-phosphopantetheine moiety from coenzyme A to a Ser of acyl-carrier-protein. This Burkholderia pseudomallei (strain 668) protein is Holo-[acyl-carrier-protein] synthase.